Reading from the N-terminus, the 1119-residue chain is Translation initiation factor IF-2 (1119 aa).

2 disordered regions span residues 64–463 and 477–507; these read SIKK…TSGY and RPKK…RQRQ. Residues 70–102 are compositionally biased toward basic and acidic residues; it reads IKKDNYKQNKEDKSSLISSVEEKPFKDNPEKKP. Composition is skewed to polar residues over residues 116–153 and 182–212; these read IISN…QNLN and KNTT…KPDQ. Residues 213-224 show a composition bias toward low complexity; sequence NSSKSKTKNINN. Polar residues-rich tracts occupy residues 242 to 257, 281 to 297, 319 to 328, and 375 to 387; these read NKQN…QTVP, FNRQ…SSNK, FNRQVNTNRS, and QVIN…NSET. Basic and acidic residues predominate over residues 421-435; the sequence is GKTDWDDSAKLEALR. Over residues 493 to 507 the composition is skewed to basic residues; the sequence is KQFKKKKKETTRQRQ. The tr-type G domain occupies 610-782; it reads KRPPVITVMG…ILLVSEVEDL (173 aa). Residues 619–626 form a G1 region; sequence GHVDHGKT. 619-626 contributes to the GTP binding site; it reads GHVDHGKT. The segment at 644-648 is G2; that stretch reads GITQH. The interval 669–672 is G3; sequence DTPG. GTP contacts are provided by residues 669–673 and 723–726; these read DTPGH and NKID. The interval 723-726 is G4; that stretch reads NKID. Residues 759 to 761 are G5; sequence SAI.

This sequence belongs to the TRAFAC class translation factor GTPase superfamily. Classic translation factor GTPase family. IF-2 subfamily.

It localises to the cytoplasm. One of the essential components for the initiation of protein synthesis. Protects formylmethionyl-tRNA from spontaneous hydrolysis and promotes its binding to the 30S ribosomal subunits. Also involved in the hydrolysis of GTP during the formation of the 70S ribosomal complex. In Prochlorococcus marinus (strain MIT 9215), this protein is Translation initiation factor IF-2.